The primary structure comprises 142 residues: Regulatory protein RecX (142 aa).

This sequence belongs to the RecX family.

It is found in the cytoplasm. Functionally, modulates RecA activity. In Thermus thermophilus (strain ATCC BAA-163 / DSM 7039 / HB27), this protein is Regulatory protein RecX.